The sequence spans 413 residues: Na(+)/H(+) antiporter NhaA (413 aa).

11 consecutive transmembrane segments (helical) span residues 15–35 (LESG…ALFV), 57–77 (LLHW…GLEI), 93–113 (ALPC…YASL), 123–143 (GWAI…SLLG), 152–172 (IFLA…IAVF), 175–195 (AELN…LLGF), 211–231 (VALW…GVVL), 261–281 (WVAF…SFAG), 295–315 (VALG…WLAI), 333–353 (GVSL…LLAF), and 364–384 (VGVL…LSLT).

Belongs to the NhaA Na(+)/H(+) (TC 2.A.33) antiporter family.

It is found in the cell inner membrane. It catalyses the reaction Na(+)(in) + 2 H(+)(out) = Na(+)(out) + 2 H(+)(in). In terms of biological role, na(+)/H(+) antiporter that extrudes sodium in exchange for external protons. In Caulobacter vibrioides (strain ATCC 19089 / CIP 103742 / CB 15) (Caulobacter crescentus), this protein is Na(+)/H(+) antiporter NhaA.